We begin with the raw amino-acid sequence, 38 residues long: Photosystem II reaction center protein L (38 aa).

The chain crosses the membrane as a helical span at residues 17-37 (GLYWGLLLIFVLAVLFSSYFF).

The protein belongs to the PsbL family. PSII is composed of 1 copy each of membrane proteins PsbA, PsbB, PsbC, PsbD, PsbE, PsbF, PsbH, PsbI, PsbJ, PsbK, PsbL, PsbM, PsbT, PsbX, PsbY, PsbZ, Psb30/Ycf12, at least 3 peripheral proteins of the oxygen-evolving complex and a large number of cofactors. It forms dimeric complexes.

The protein localises to the plastid. It localises to the chloroplast thylakoid membrane. Its function is as follows. One of the components of the core complex of photosystem II (PSII). PSII is a light-driven water:plastoquinone oxidoreductase that uses light energy to abstract electrons from H(2)O, generating O(2) and a proton gradient subsequently used for ATP formation. It consists of a core antenna complex that captures photons, and an electron transfer chain that converts photonic excitation into a charge separation. This subunit is found at the monomer-monomer interface and is required for correct PSII assembly and/or dimerization. This is Photosystem II reaction center protein L from Staurastrum punctulatum (Green alga).